We begin with the raw amino-acid sequence, 65 residues long: Small, acid-soluble spore protein Tlp (65 aa).

This sequence belongs to the Tlp family.

Its subcellular location is the spore core. This Bacillus anthracis (strain A0248) protein is Small, acid-soluble spore protein Tlp.